A 640-amino-acid chain; its full sequence is 1-deoxy-D-xylulose-5-phosphate synthase (640 aa).

Thiamine diphosphate is bound by residues His-79 and 120 to 122 (GHS). Mg(2+) is bound at residue Asp-151. Residues 152-153 (GS), Asn-180, Tyr-290, and Glu-372 each bind thiamine diphosphate. Asn-180 lines the Mg(2+) pocket.

Belongs to the transketolase family. DXPS subfamily. As to quaternary structure, homodimer. Mg(2+) is required as a cofactor. Requires thiamine diphosphate as cofactor.

The enzyme catalyses D-glyceraldehyde 3-phosphate + pyruvate + H(+) = 1-deoxy-D-xylulose 5-phosphate + CO2. The protein operates within metabolic intermediate biosynthesis; 1-deoxy-D-xylulose 5-phosphate biosynthesis; 1-deoxy-D-xylulose 5-phosphate from D-glyceraldehyde 3-phosphate and pyruvate: step 1/1. Catalyzes the acyloin condensation reaction between C atoms 2 and 3 of pyruvate and glyceraldehyde 3-phosphate to yield 1-deoxy-D-xylulose-5-phosphate (DXP). The sequence is that of 1-deoxy-D-xylulose-5-phosphate synthase from Rhodopseudomonas palustris (strain BisA53).